A 1370-amino-acid polypeptide reads, in one-letter code: DNA-directed RNA polymerase subunit beta (1370 aa).

The protein belongs to the RNA polymerase beta chain family. The RNAP catalytic core consists of 2 alpha, 1 beta, 1 beta' and 1 omega subunit. When a sigma factor is associated with the core the holoenzyme is formed, which can initiate transcription.

It catalyses the reaction RNA(n) + a ribonucleoside 5'-triphosphate = RNA(n+1) + diphosphate. Functionally, DNA-dependent RNA polymerase catalyzes the transcription of DNA into RNA using the four ribonucleoside triphosphates as substrates. The polypeptide is DNA-directed RNA polymerase subunit beta (Geobacter sulfurreducens (strain ATCC 51573 / DSM 12127 / PCA)).